Here is a 2136-residue protein sequence, read N- to C-terminus: U5 small nuclear ribonucleoprotein 200 kDa helicase (2136 aa).

Residues S17 and S26 each carry the phosphoserine modification. K46 participates in a covalent cross-link: Glycyl lysine isopeptide (Lys-Gly) (interchain with G-Cter in SUMO2). A disordered region spans residues 50–80 (TRMGDKAQRTKPQMQEERRAKRRKRDEDRHD). The stretch at 54–84 (DKAQRTKPQMQEERRAKRRKRDEDRHDINKM) forms a coiled coil. S225 carries the phosphoserine modification. Phosphothreonine is present on T389. The interaction with C9orf78 and WBP4 stretch occupies residues 395–2129 (DLDQGGEALA…YKFSVDVKEA (1735 aa)). One can recognise a Helicase ATP-binding 1 domain in the interval 490–673 (RAALETDENL…FLRVDPAKGL (184 aa)). Position 503–510 (503–510 (APTGAGKT)) interacts with ATP. Residues 615–618 (DEIH) carry the DEIH box motif. Residues 684-921 (PLEQTYVGIT…NAKDAVNWLG (238 aa)) enclose the Helicase C-terminal 1 domain. Y709 is subject to Phosphotyrosine. The residue at position 971 (K971) is an N6-acetyllysine. Residues 981–1286 (VTELGRIASH…SCETQLPVSF (306 aa)) enclose the SEC63 1 domain. The interaction with TSSC4 stretch occupies residues 1282 to 2136 (LPVSFRHLIL…KEAETDSDSD (855 aa)). One can recognise a Helicase ATP-binding 2 domain in the interval 1337 to 1512 (NTVYNSDDNV…WLGCSATSTF (176 aa)). 1350–1357 (APTGSGKT) serves as a coordination point for ATP. At T1428 the chain carries Phosphothreonine. The DEVH box motif lies at 1454-1457 (DEVH). Positions 1545–1753 (PVYHAITKHS…TIENKQDAVD (209 aa)) constitute a Helicase C-terminal 2 domain. A Phosphothreonine modification is found at T1765. The SEC63 2 domain maps to 1812 to 2124 (PLNLGMIAAY…GCDQEYKFSV (313 aa)). Position 2002 is a phosphoserine (S2002). Phosphothreonine is present on T2131. A phosphoserine mark is found at S2133 and S2135.

This sequence belongs to the helicase family. SKI2 subfamily. Component of a core complex containing at least PRPF8, SNRNP200, EFTUD2 and SNRNP40. Component of the U5 snRNP and U4/U6-U5 tri-snRNP complexes, building blocks of the spliceosome. Component of the U4/U6-U5 tri-snRNP complex composed of the U4, U6 and U5 snRNAs and at least PRPF3, PRPF4, PRPF6, PRPF8, PRPF31, SNRNP200, TXNL4A, SNRNP40, DDX23, CD2BP2, PPIH, SNU13, EFTUD2, SART1 and USP39. Component of precatalytic, catalytic and postcatalytic spliceosomal complexes. Component of the minor spliceosome, which splices U12-type introns. Interacts with C9orf78; the interaction is direct and mutually exclusive with its interaction with WBP4. Interacts with WBP4; the interaction is mutually exclusive with its interaction with C9orf78. Interacts with PRPF8. Interacts with TSSC4; the interaction is direct, excludes recruitment of C9ORF78 and WBP4 to SNRNP200 and negatively regulates its RNA helicase activity. In terms of tissue distribution, widely expressed.

It is found in the nucleus. It catalyses the reaction ATP + H2O = ADP + phosphate + H(+). Catalyzes the ATP-dependent unwinding of U4/U6 RNA duplices, an essential step in the assembly of a catalytically active spliceosome. Plays a role in pre-mRNA splicing as a core component of precatalytic, catalytic and postcatalytic spliceosomal complexes. As a component of the minor spliceosome, involved in the splicing of U12-type introns in pre-mRNAs. Involved in spliceosome assembly, activation and disassembly. Mediates changes in the dynamic network of RNA-RNA interactions in the spliceosome. The protein is U5 small nuclear ribonucleoprotein 200 kDa helicase (SNRNP200) of Homo sapiens (Human).